Reading from the N-terminus, the 249-residue chain is 5-amino-6-(5-phospho-D-ribitylamino)uracil phosphatase YcsE (249 aa).

Asp-16 serves as the catalytic Nucleophile. Asp-16 provides a ligand contact to Mg(2+). Residue Met-17 coordinates phosphate. Asp-18 lines the Mg(2+) pocket. Phosphate-binding positions include 50 to 51 (TG) and Lys-177. 2 residues coordinate Mg(2+): Asp-200 and Ser-201. Asn-203 is a phosphate binding site.

Belongs to the HAD-like hydrolase superfamily. Cof family. Mg(2+) serves as cofactor.

The enzyme catalyses 5-amino-6-(5-phospho-D-ribitylamino)uracil + H2O = 5-amino-6-(D-ribitylamino)uracil + phosphate. The protein operates within cofactor biosynthesis; riboflavin biosynthesis; 5-amino-6-(D-ribitylamino)uracil from GTP: step 4/4. In terms of biological role, catalyzes the dephosphorylation of the riboflavin precursor 5-amino-6-(5-phospho-D-ribitylamino)uracil and of flavin mononucleotide (FMN) in vitro. To a lesser extent, may also catalyze the dephosphorylation of a broad range of substrates such as phosphorylated sugars and triphosphate nucleotides in vitro. The sequence is that of 5-amino-6-(5-phospho-D-ribitylamino)uracil phosphatase YcsE (ycsE) from Bacillus subtilis (strain 168).